A 241-amino-acid chain; its full sequence is MSASLVNRSLKNIRNELEFLKESNVISGDIFELINSKLPEKWDGNQRSPQNADTEEYVEALYDFEAQQDGDLSLKTGDKIQVLEKISPDWYRGKSNNKIGIFPANYVKPAFTRSASPKSAEAASSSTVSRPSVPPPSYEPAASQYPSQQVSAPYAPPAGYMQAPPPQQQQAPLPYPPPFTNYYQQPQQQYAPPSQQAPVEAQPQQSSGASSAFKSFGSKLGNAAIFGAGSAIGSDIVNSIF.

Residue S2 is modified to N-acetylserine. Residue K41 forms a Glycyl lysine isopeptide (Lys-Gly) (interchain with G-Cter in ubiquitin) linkage. The residue at position 48 (S48) is a Phosphoserine. The 60-residue stretch at D53 to T112 folds into the SH3 domain. K79 is covalently cross-linked (Glycyl lysine isopeptide (Lys-Gly) (interchain with G-Cter in ubiquitin)). Phosphoserine is present on residues S114 and S116. K118 participates in a covalent cross-link: Glycyl lysine isopeptide (Lys-Gly) (interchain with G-Cter in ubiquitin). Residues K118–P131 are compositionally biased toward low complexity. Residues K118–F213 form a disordered region. A PY motif motif is present at residues P135–Y138. The segment covering A163–F179 has biased composition (pro residues). Positions T180 to F213 are enriched in low complexity. K219 participates in a covalent cross-link: Glycyl lysine isopeptide (Lys-Gly) (interchain with G-Cter in ubiquitin).

The protein belongs to the LSB1 family. In terms of assembly, interacts with LAS17, RSP5 and SUP35. Post-translationally, ubiquitinated by RSP5.

It is found in the cytoplasm. Its subcellular location is the nucleus. It localises to the cytoskeleton. The protein resides in the actin patch. Its function is as follows. Involved in resistance to EDTA. The polypeptide is LAS seventeen-binding protein 1 (LSB1) (Saccharomyces cerevisiae (strain ATCC 204508 / S288c) (Baker's yeast)).